The chain runs to 219 residues: Pyridoxal 5'-phosphate synthase subunit PDX2 (219 aa).

Gly-52–Ser-54 provides a ligand contact to L-glutamine. Residue Cys-87 is the Nucleophile of the active site. Residues Arg-121 and Ile-153–Arg-154 each bind L-glutamine. Catalysis depends on charge relay system residues His-196 and Glu-198.

This sequence belongs to the glutaminase PdxT/SNO family. In the presence of Pdx1, forms a dodecamer of heterodimers. Only shows activity in the heterodimer.

It localises to the cytoplasm. It carries out the reaction aldehydo-D-ribose 5-phosphate + D-glyceraldehyde 3-phosphate + L-glutamine = pyridoxal 5'-phosphate + L-glutamate + phosphate + 3 H2O + H(+). The catalysed reaction is L-glutamine + H2O = L-glutamate + NH4(+). Its pathway is cofactor biosynthesis; pyridoxal 5'-phosphate biosynthesis. Functionally, catalyzes the hydrolysis of glutamine to glutamate and ammonia as part of the biosynthesis of pyridoxal 5'-phosphate. The resulting ammonia molecule is channeled to the active site of Pdx1. This chain is Pyridoxal 5'-phosphate synthase subunit PDX2, found in Plasmodium falciparum (isolate 3D7).